The sequence spans 1219 residues: MAILKRGARKKVHQEPAKRSANIKKATFDSSKKKEVGVSDLTLLSKISDEAINENLKKRFLNATIYTYIGHVLISVNPFRDLGIYTDAVMNEYKGKNRLEVPPHVFAIAESMYYNMKSYNENQCVIISGESGAGKTEAAKRIMQYIAAASSTHTESIGKIKDMVLATNPLLESFGCAKTLRNNNSSRHGKYLEIKFNNQFEPCAGNITNYLLEKQRVVSQIKNERNFHIFYQFTKGASDAYRQTFGVQKPEQYVYTAAAGCISAETIDDLQDYQETLKAMRVIGLGQEEQDQIFRMLAAILWIGNVSFIENEEGNAQVRDTSVTDFVAYLLQIDSQLLIKSLVERIMETNHGMKRGSVYHVPLNIVQADAVRDALAKAIYNNLFDWIVSRVNKSLQAFPGAEKSIGILDIYGFEIFEHNSFEQICINYVNEKLQQIFIQLTLKSEQETYEREKIQWTPIKYFDNKVVCDLIEARRPPGIFAAMNDSVATAHADSNAADQAFAQRLNLFTTNPHFDLRSNKFVIKHYAGDVTYDIDGITDKNKDQLQKDLVELIGTTTNTFLATIFPDTVDRESKRRPPTAGDKIIKSANDLVETLSKAQPSYIRTIKPNETKSPNDYDDRQVLHQIKYLGLQENVRIRRAGFAYRQVFEKFVERFYLLSPHCSYAGDYTWQGDTLDAVKYILQDSSIPQQEYQLGVTSVFIKTPETLFALEHMRDRYWHNMAARIQRAWRRFLQRRIDAATKIQRTIRERKEGNKYEKLRDYGTKVLGGRKERRSMSLLGYRAFMGDYLSCNESKSKGAYIKRQVSIKEKVIFSIHGEALHTKFGRSAQRLKKTFLLTPTTLYIVGQTLVQNAMTYTQDYKIDVRNIQAVSLTNLQDDWVAIKLASSGQPDPLINTYFKTELITHLKRLNDKIQIKIGSAIEYQKKPGKLHSVKCQINESAPKYGDIYKSSTISVRRGNPPNSQVHKKPRKKSSISSGYHASSSQATRRPVSIAAAQHVPTAPASRHSKKPAPPPPGMQNKAATRRSVPNPASTLTASQSNARPSPPTAATRATPAATPAAAAMGSGRQANIPPPPPPPPPSSKPKEPMFEAAYDFPGSGSPSELPLKKGDVIYITREEPSGWSLGKLLDGSKEGWVPTAYMKPHSGNNNIPTPPQNRDVPKPVLNSVQHDNTSANVIPAAAQASLGDGLANALAARANKMRLESDDEEANEDEEEDDW.

The span at 1–12 (MAILKRGARKKV) shows a compositional bias: basic residues. The segment at 1–20 (MAILKRGARKKVHQEPAKRS) is disordered. The 680-residue stretch at 36–715 (VGVSDLTLLS…TLFALEHMRD (680 aa)) folds into the Myosin motor domain. An ATP-binding site is contributed by 129 to 136 (GESGAGKT). Ser-357 carries the post-translational modification Phosphoserine. The residue at position 359 (Tyr-359) is a Phosphotyrosine. The actin-binding stretch occupies residues 404–486 (SIGILDIYGF…PGIFAAMNDS (83 aa)). IQ domains lie at 719–739 (HNMA…RIDA) and 740–765 (ATKI…YGTK). The TH1 domain occupies 771–961 (KERRSMSLLG…TISVRRGNPP (191 aa)). Ser-777 is subject to Phosphoserine. Polar residues predominate over residues 951-964 (STISVRRGNPPNSQ). Disordered regions lie at residues 951–1106 (STIS…SELP) and 1139–1167 (TAYM…VLNS). Residues 974-984 (SISSGYHASSS) show a composition bias toward low complexity. Residue Ser-992 is modified to Phosphoserine. Residues 1030-1041 (NPASTLTASQSN) show a composition bias toward polar residues. Over residues 1048–1063 (TAATRATPAATPAAAA) the composition is skewed to low complexity. Pro residues predominate over residues 1072-1083 (IPPPPPPPPPSS). The SH3 domain occupies 1085–1147 (PKEPMFEAAY…PTAYMKPHSG (63 aa)). Ser-1205 is subject to Phosphoserine.

Belongs to the TRAFAC class myosin-kinesin ATPase superfamily. Myosin family. As to quaternary structure, interacts (via myosin motor domain) with SHE4; this interaction is important for proper localization and may regulate the interaction of the motor domain with actin. Interacts (via SH3 domain) with VRP1; this interaction is required for localization to sites of polarized growth and may regulate the interaction of the tail domain with actin. Interacts (via SH3 domain) with PAN1; this interaction is important for late stages of endocytopsis. Interacts (via SH3 domain) with BBC1 and LAS17. Interacts (via C-terminal acidic tail) with ARC19 and ARC40; ARC19 and ARC40 are Arp2/3 complex subunits. Interacts with BZZ1, PKH1, PKH2, YPK1 and YPK2. Post-translationally, phosphorylation of the TEDS site (Ser-357) is required for the polarization of the actin cytoskeleton and for ligand-induced, but not for constitutive internalization of STE2. Phosphorylation probably activates the myosin-I ATPase activity. Ser-357 is phosphorylated by YPK2 in vitro.

The protein resides in the cytoplasm. It localises to the cytoskeleton. The protein localises to the actin patch. Functionally, one of two redundant type-I myosins implicated in the organization of the actin cytoskeleton. Required for proper actin cytoskeleton polarization and for the internalization step in endocytosis. At the cell cortex, assembles in patch-like structures together with proteins from the actin-polymerizing machinery and promotes actin assembly. Functions redundantly with LAS17 as actin nucleation-promoting factor (NPF) for the Arp2/3 complex. Motor domain phosphorylation by PAK kinases CLA4 and STE20 promotes CDC42-regulated actin assembly. Functions together with the NPF PAN1 in late stages of endocytosis. Motor domain phosphorylation by PDK1 kinases PKH1 and PKH2, and by SGK kinases YPK1 and YPK2, promotes ligand-induced, but not constitutive endocytosis of the G protein-coupled receptor STE2. This chain is Myosin-5 (MYO5), found in Saccharomyces cerevisiae (strain YJM789) (Baker's yeast).